A 101-amino-acid polypeptide reads, in one-letter code: Integration host factor subunit alpha (101 aa).

It belongs to the bacterial histone-like protein family. In terms of assembly, heterodimer of an alpha and a beta chain.

Functionally, this protein is one of the two subunits of integration host factor, a specific DNA-binding protein that functions in genetic recombination as well as in transcriptional and translational control. In Halorhodospira halophila (strain DSM 244 / SL1) (Ectothiorhodospira halophila (strain DSM 244 / SL1)), this protein is Integration host factor subunit alpha.